Reading from the N-terminus, the 100-residue chain is NADH-quinone oxidoreductase subunit K (100 aa).

3 helical membrane passes run 4-24 (LFHG…SLIV), 28-48 (ILFM…ALVV), and 60-80 (IMYI…LALL).

This sequence belongs to the complex I subunit 4L family. In terms of assembly, NDH-1 is composed of 13 different subunits. Subunits NuoA, H, J, K, L, M, N constitute the membrane sector of the complex.

It localises to the cell membrane. It carries out the reaction a quinone + NADH + 5 H(+)(in) = a quinol + NAD(+) + 4 H(+)(out). NDH-1 shuttles electrons from NADH, via FMN and iron-sulfur (Fe-S) centers, to quinones in the respiratory chain. The immediate electron acceptor for the enzyme in this species is believed to be ubiquinone. Couples the redox reaction to proton translocation (for every two electrons transferred, four hydrogen ions are translocated across the cytoplasmic membrane), and thus conserves the redox energy in a proton gradient. In Buchnera aphidicola subsp. Schizaphis graminum (strain Sg), this protein is NADH-quinone oxidoreductase subunit K.